The chain runs to 93 residues: N-myc protein (93 aa).

Efficient DNA binding requires dimerization with another bHLH protein. Binds DNA as a heterodimer with MAX. In terms of tissue distribution, barely detectable in most tissues assayed.

It is found in the nucleus. In terms of biological role, may function as a transcription factor. This is N-myc protein (mycn) from Danio rerio (Zebrafish).